A 164-amino-acid chain; its full sequence is Cyclic pyranopterin monophosphate synthase (164 aa).

Residues 75 to 77 (MCH) and 116 to 117 (ME) each bind substrate. Residue Asp-131 is part of the active site.

It belongs to the MoaC family. Homohexamer; trimer of dimers.

It carries out the reaction (8S)-3',8-cyclo-7,8-dihydroguanosine 5'-triphosphate = cyclic pyranopterin phosphate + diphosphate. The protein operates within cofactor biosynthesis; molybdopterin biosynthesis. Its function is as follows. Catalyzes the conversion of (8S)-3',8-cyclo-7,8-dihydroguanosine 5'-triphosphate to cyclic pyranopterin monophosphate (cPMP). The protein is Cyclic pyranopterin monophosphate synthase of Staphylococcus aureus (strain MSSA476).